Here is a 493-residue protein sequence, read N- to C-terminus: MQSLSQLGPSEIFLVARREKPSTRAQLWFTGRLSFRQETNGIRLKNRVEFSPRPVPPNLIAAEKEEAKAVLTLFFKKQGLSNSLSSRLINKSDLFIDHLVSRLHSVHKARYLVGRELTTLEIRDSLIPYLEQLHEEHGDLLAELVVSFPDPPAEPRLVASSPVSVLPPRGDTDSAADTRKLRAVSRVSELDTEGALRPQTLYLLDLGLNLEQIKTITRKFAAFPYYSLDGKIKPVVEFLLDLGIPKSDIPTILCKRPQICGISLTDNLKPTMAFLETLGIDKNQWAKIISRFPAILTYSRQKLTSTVEFLSQTGLTEEQIGRILTRCPNIMSYSVEDKLRPTMEYFRSLNVDVAVLLHRCPQTFGLSIESNLKPVTEFFLEKGFGLDEIGIMISRYGALYTFSLKENVMPKWDYFQTMDYPKSELVKFPQFFGYSLQERIKPRYELVQRSGVRLLLNQVLSLSGIEFEKVVKKKMMKLVSNNVIAEQSSGGLL.

A chloroplast-targeting transit peptide spans 1 to 43; sequence MQSLSQLGPSEIFLVARREKPSTRAQLWFTGRLSFRQETNGIR.

Belongs to the mTERF family. Interacts with pTAC6. Expressed in roots, rosette leaves, cauline leaves, stems, flower buds and open flowers.

Its subcellular location is the plastid. The protein resides in the chloroplast. Transcription termination factor required for processing and steady-state levels of plastid transcripts. Involved also in chloroplast transcriptional pausing, a general feature of chloroplast genes. Specifically and positively regulates the transcription of chloroplast psbEFLJ encoding for photosystem II (PSII) core subunits psbE, psbF, psbL and psbJ; causes the plastid-encoded RNA polymerase (PEP) complex to pause at psbEFLJ by binding to the +30 to +51 region of double-stranded DNA, and recruits additional pTAC6 to the transcriptionally paused region of psbEFLJ. May play a role in response to abiotic stresses. The sequence is that of Transcription termination factor MTERF5, chloroplastic from Arabidopsis thaliana (Mouse-ear cress).